We begin with the raw amino-acid sequence, 437 residues long: MTSYMAIDGSALVPLRQKPRRKTQGFLTMSRRRISCKDLGHADCQGWLYKKKEKGSFLSNKWKKFWVILKGSSLYWYSNQMAEKADGFVNLPDFTVERASECKKKHAFKISHPQIKTFYFAAENVQEMNVWLNKLGSAVIHQESTTKDEECYSESEQEDPEIAAETPPPPHASQTQSLTAQQASSSSPSLSGTSYSFSSLENTVKTPSSFPSSLSKERQSLPDTVNSLSAAEDEGQPITFAVQVHSPVPSEAGIHKALENSFVTSESGFLNSLSSDDTSSLSSNHDHLTVPDKPAGSKIMDKEETKVSEDDEMEKLYKSLEQASLSPLGDRRPSTKKELRKSFVKRCKNPSINEKLHKIRTLNSTLKCKEHDLAMINQLLDDPKLTARKYREWKVMNTLLIQDIYQQQRASPAPDDTDDTPQELKKSPSSPSVENSI.

The 100-residue stretch at 41–140 (HADCQGWLYK…WLNKLGSAVI (100 aa)) folds into the PH domain. Disordered regions lie at residues 143-225 (ESTT…PDTV) and 273-307 (LSSD…ETKV). A compositionally biased stretch (acidic residues) spans 151-162 (CYSESEQEDPEI). A compositionally biased stretch (low complexity) spans 172–200 (ASQTQSLTAQQASSSSPSLSGTSYSFSSL). The span at 201-214 (ENTVKTPSSFPSSL) shows a compositional bias: polar residues. Residues 273–283 (LSSDDTSSLSS) show a composition bias toward low complexity. CRAC domain regions lie at residues 315 to 320 (KLYKSL) and 339 to 348 (LRKSFVKRCK). Positions 389–437 (KYREWKVMNTLLIQDIYQQQRASPAPDDTDDTPQELKKSPSSPSVENSI) are required for interaction with CYTH2. Residues 406–437 (QQQRASPAPDDTDDTPQELKKSPSSPSVENSI) form a disordered region. At S411 the chain carries Phosphoserine. The span at 427–437 (SPSSPSVENSI) shows a compositional bias: polar residues.

Interacts with guanine-nucleotide exchange factors PSCD1, PSCD2, PSCD3 and PSCD4. Interacts (via C-terminus) with cytohesin-2 CYTH2.

The protein localises to the cytoplasm. It localises to the cell membrane. Its function is as follows. Enhances the promotion of guanine-nucleotide exchange by PSCD2 on ARF6 in a concentration-dependent manner. This is Interactor protein for cytohesin exchange factors 1 (IPCEF1) from Homo sapiens (Human).